Here is a 580-residue protein sequence, read N- to C-terminus: Mitogen-activated protein kinase 12 (580 aa).

The segment at 18-38 (RTASGSNQSSNAGEEAASSDL) is disordered. A compositionally biased stretch (polar residues) spans 20-29 (ASGSNQSSNA). The Protein kinase domain maps to 87-378 (YQIQEVIGKG…AEEALADPYF (292 aa)). Residues 93-101 (IGKGSYGVV) and Lys116 contribute to the ATP site. The Proton acceptor role is filled by Asp213. Position 249 is a phosphothreonine (Thr249). A TXY motif is present at residues 249-251 (TDY). Position 251 is a phosphotyrosine (Tyr251). Residues 325–506 (ARRYLSTMRK…SADSVARTTV (182 aa)) are required for kinase activity and nuclear localization. Residues 458 to 580 (YSKGERGSPL…LSEQVSRMHS (123 aa)) are disordered. Residues 502–543 (ARTTVSPPMSQDAQQHGSAGQNGVTSTDLSSRSYLKSASISA) are compositionally biased toward polar residues. Residues 554-566 (EPEDDYISEEMEG) show a composition bias toward acidic residues.

This sequence belongs to the protein kinase superfamily. CMGC Ser/Thr protein kinase family. MAP kinase subfamily. As to quaternary structure, interacts with EREBP1. Post-translationally, dually phosphorylated on Thr-249 and Tyr-251, which activates the enzyme. Phosphorylated on tyrosine residue.

It is found in the cytoplasm. The protein resides in the nucleus. The enzyme catalyses L-seryl-[protein] + ATP = O-phospho-L-seryl-[protein] + ADP + H(+). It catalyses the reaction L-threonyl-[protein] + ATP = O-phospho-L-threonyl-[protein] + ADP + H(+). Its activity is regulated as follows. Activated by threonine and tyrosine phosphorylation. Activated in response to hydrogen peroxide, salicylic acid, jasmonic acid, ethylene, fungal elicitor and infection with rice blast fungus (M.grisea). Functionally, may be involved in defense signaling pathway. Phosphorylates EREBP1 transcriptional activator in vitro. Enhances DNA-binding activity of EREBP1 to the GCC box element of pathogenesis-related (PR) gene promoters. The polypeptide is Mitogen-activated protein kinase 12 (MPK12) (Oryza sativa subsp. japonica (Rice)).